The chain runs to 988 residues: Mediator of RNA polymerase II transcription subunit 24 (988 aa).

6 consecutive short sequence motifs (LXXLL motif) follow at residues 128–132, 341–345, 445–449, 555–559, 786–790, and 856–860; these read LNWLL, LTPLL, LDLLL, LVALL, LPSLL, and LMRLL.

Belongs to the Mediator complex subunit 24 family. As to quaternary structure, component of the Mediator complex.

It is found in the nucleus. Its function is as follows. Component of the Mediator complex, a coactivator involved in the regulated transcription of nearly all RNA polymerase II-dependent genes. Mediator functions as a bridge to convey information from gene-specific regulatory proteins to the basal RNA polymerase II transcription machinery. Mediator is recruited to promoters by direct interactions with regulatory proteins and serves as a scaffold for the assembly of a functional preinitiation complex with RNA polymerase II and the general transcription factors. The polypeptide is Mediator of RNA polymerase II transcription subunit 24 (med24) (Xenopus laevis (African clawed frog)).